The sequence spans 253 residues: Probable transcriptional regulatory protein KRH_13670 (253 aa).

Belongs to the TACO1 family.

Its subcellular location is the cytoplasm. The polypeptide is Probable transcriptional regulatory protein KRH_13670 (Kocuria rhizophila (strain ATCC 9341 / DSM 348 / NBRC 103217 / DC2201)).